Here is a 447-residue protein sequence, read N- to C-terminus: Argininosuccinate synthase (447 aa).

ATP contacts are provided by residues 17–25 (AFSGGLDTS) and Ala-43. Position 99 (Tyr-99) interacts with L-citrulline. ATP contacts are provided by Gly-129 and Thr-131. L-aspartate contacts are provided by Thr-131, Asn-135, and Asp-136. L-citrulline is bound at residue Asn-135. Asp-136 contributes to the ATP binding site. The L-citrulline site is built by Arg-139 and Ser-192. Position 194 (Asp-194) interacts with ATP. 3 residues coordinate L-citrulline: Thr-201, Glu-203, and Glu-280.

This sequence belongs to the argininosuccinate synthase family. Type 2 subfamily. As to quaternary structure, homotetramer.

Its subcellular location is the cytoplasm. The enzyme catalyses L-citrulline + L-aspartate + ATP = 2-(N(omega)-L-arginino)succinate + AMP + diphosphate + H(+). It functions in the pathway amino-acid biosynthesis; L-arginine biosynthesis; L-arginine from L-ornithine and carbamoyl phosphate: step 2/3. This Escherichia fergusonii (strain ATCC 35469 / DSM 13698 / CCUG 18766 / IAM 14443 / JCM 21226 / LMG 7866 / NBRC 102419 / NCTC 12128 / CDC 0568-73) protein is Argininosuccinate synthase.